The chain runs to 146 residues: Large ribosomal subunit protein uL15 (146 aa).

Residues 1–54 (MTIKLHDLRPAPGSKTPRTRVGRGEGSKGKTAGRGTKGTKARKQVPTTFEGGQM) are disordered.

Belongs to the universal ribosomal protein uL15 family. In terms of assembly, part of the 50S ribosomal subunit.

Its function is as follows. Binds to the 23S rRNA. This is Large ribosomal subunit protein uL15 from Mycobacterium ulcerans (strain Agy99).